Here is a 940-residue protein sequence, read N- to C-terminus: Isoleucine--tRNA ligase (940 aa).

A 'HIGH' region motif is present at residues 58 to 68; sequence PYANGNIHIGH. Residue Glu-563 coordinates L-isoleucyl-5'-AMP. The 'KMSKS' region motif lies at 604–608; the sequence is KMSKS. Position 607 (Lys-607) interacts with ATP. Zn(2+) is bound by residues Cys-903, Cys-906, Cys-923, and Cys-926.

It belongs to the class-I aminoacyl-tRNA synthetase family. IleS type 1 subfamily. In terms of assembly, monomer. Requires Zn(2+) as cofactor.

It localises to the cytoplasm. The catalysed reaction is tRNA(Ile) + L-isoleucine + ATP = L-isoleucyl-tRNA(Ile) + AMP + diphosphate. Its function is as follows. Catalyzes the attachment of isoleucine to tRNA(Ile). As IleRS can inadvertently accommodate and process structurally similar amino acids such as valine, to avoid such errors it has two additional distinct tRNA(Ile)-dependent editing activities. One activity is designated as 'pretransfer' editing and involves the hydrolysis of activated Val-AMP. The other activity is designated 'posttransfer' editing and involves deacylation of mischarged Val-tRNA(Ile). This is Isoleucine--tRNA ligase from Buchnera aphidicola subsp. Acyrthosiphon pisum (strain 5A).